Reading from the N-terminus, the 633-residue chain is Probable sodium/potassium/calcium exchanger CG1090 (633 aa).

An N-terminal signal peptide occupies residues 1–21 (MWNMGLLFLIYYCVSIYSAKG). At 22-111 (DTKDGQVLPL…PLMNKWARQH (90 aa)) the chain is on the extracellular side. A helical membrane pass occupies residues 112 to 132 (GGLILHILVAVFTFFGLAIVC). Residues 133–157 (DEYFVASLDRLCEELKLSPDVAGAT) lie on the Cytoplasmic side of the membrane. One copy of the Alpha-1 repeat lies at 153-193 (VAGATFMAAGSSAPELATVVIGVFFAKDDIGISGVIGSAVF). Residues 158–178 (FMAAGSSAPELATVVIGVFFA) traverse the membrane as a helical segment. Topologically, residues 179 to 181 (KDD) are extracellular. A helical membrane pass occupies residues 182-202 (IGISGVIGSAVFNIMFVISVC). At 203–220 (ALCSGTVCQLNWWPLVRD) the chain is on the cytoplasmic side. The next 2 helical transmembrane spans lie at 221 to 241 (CFFY…DVIS) and 242 to 262 (CFES…LHFN). The Extracellular portion of the chain corresponds to 263-427 (TELERWALGL…EPRRDPLLRP (165 aa)). 3 stretches are compositionally biased toward polar residues: residues 298 to 310 (YTQE…QGQK), 320 to 333 (AKPQ…SDPN), and 395 to 405 (QVVSTQATSAG). The disordered stretch occupies residues 298–422 (YTQESVGQTQ…TDKQREPRRD (125 aa)). Residues 411–422 (KSTDKQREPRRD) are compositionally biased toward basic and acidic residues. A helical transmembrane segment spans residues 428 to 448 (MEGGLPALVSWYVVYPIHFLC). Residues 449 to 468 (KKTMPDCRQEQYRNWYPFTF) lie on the Cytoplasmic side of the membrane. The chain crosses the membrane as a helical span at residues 469-489 (LMSMVWISFYSYFMVWMITVI). Topologically, residues 490-500 (GSTLAIPDTVM) are extracellular. Residues 501 to 521 (GLTFVAAGVSVPDALSSIAVI) form a helical membrane-spanning segment. The stretch at 506–537 (AAGVSVPDALSSIAVIKEGFGDMAVSNAIGSN) is one Alpha-2 repeat. Topologically, residues 522–535 (KEGFGDMAVSNAIG) are cytoplasmic. Residues 536–556 (SNVFDILVCLGLPWFIQTAII) form a helical membrane-spanning segment. Topologically, residues 557-568 (KPGSHVNVISKG) are extracellular. The helical transmembrane segment at 569–589 (LAYSTLSLFSTVVFLILSTHL) threads the bilayer. Residues 590-597 (NGWKLDKR) are Cytoplasmic-facing. The chain crosses the membrane as a helical span at residues 598–618 (LGIILMVWYLFFITLASLYEL). Residues 619–633 (NVFGYMNPPECPSTY) are Extracellular-facing.

The protein belongs to the Ca(2+):cation antiporter (CaCA) (TC 2.A.19) family. SLC24A subfamily.

The protein resides in the membrane. In terms of biological role, may function in the removal and maintenance of calcium homeostasis. Transports one Ca(2+) and 1 K(+) in exchange for 4 Na(+). The polypeptide is Probable sodium/potassium/calcium exchanger CG1090 (Drosophila melanogaster (Fruit fly)).